A 377-amino-acid polypeptide reads, in one-letter code: 23S rRNA (uracil(747)-C(5))-methyltransferase RlmC (377 aa).

Residues Cys-3, Cys-11, Cys-14, and Cys-87 each contribute to the [4Fe-4S] cluster site. Positions 212, 241, 262, and 307 each coordinate S-adenosyl-L-methionine. Cys-334 acts as the Nucleophile in catalysis.

The protein belongs to the class I-like SAM-binding methyltransferase superfamily. RNA M5U methyltransferase family. RlmC subfamily.

It catalyses the reaction uridine(747) in 23S rRNA + S-adenosyl-L-methionine = 5-methyluridine(747) in 23S rRNA + S-adenosyl-L-homocysteine + H(+). In terms of biological role, catalyzes the formation of 5-methyl-uridine at position 747 (m5U747) in 23S rRNA. This Xenorhabdus bovienii (strain SS-2004) (Xenorhabdus nematophila subsp. bovienii) protein is 23S rRNA (uracil(747)-C(5))-methyltransferase RlmC.